The primary structure comprises 881 residues: Putative SWI/SNF-related matrix-associated actin-dependent regulator of chromatin subfamily A member 3-like 1 (881 aa).

The Helicase ATP-binding domain maps to 272-486 (DKRPDPLRGG…YSLMAFLRFE (215 aa)). 285-292 (DDMGLGKT) contacts ATP. The tract at residues 308-343 (STSTPTEEPLDGEGDKIEKKGKKRGRGKSSESVTRK) is disordered. Residues 437–440 (DEAH) carry the DEAH box motif. The segment at 635 to 674 (CPICISPPTNIIITRCAHIFCRACILQTLQRSKPLCPLCR) adopts an RING-type zinc-finger fold. The segment at 681–703 (DLYNAPPPPPDSSNTDGEDAKSS) is disordered. One can recognise a Helicase C-terminal domain in the interval 711–876 (ALLSLLMASR…EREVNVEDVV (166 aa)).

It belongs to the SNF2/RAD54 helicase family. RAD16 subfamily.

The protein resides in the nucleus. In terms of biological role, possesses intrinsic ATP-dependent nucleosome-remodeling activity. This activity may be required for transcriptional activation or repression of specific target promoters. This is Putative SWI/SNF-related matrix-associated actin-dependent regulator of chromatin subfamily A member 3-like 1 from Arabidopsis thaliana (Mouse-ear cress).